A 347-amino-acid chain; its full sequence is Dolichyl-diphosphooligosaccharide--protein glycosyltransferase subunit TUSC3 (347 aa).

The first 41 residues, 1–41, serve as a signal peptide directing secretion; the sequence is MSARAAPSRRRQAGRRLRYLPTGSFPFLLLLLLLCIQLGGG. The Lumenal segment spans residues 42–196; that stretch reads QKKKENLLAE…DVHIRVFRPP (155 aa). Residues 59-187 form the Thioredoxin domain; sequence WSSRRSIFRM…LAKWIADRTD (129 aa). A glycan (N-linked (GlcNAc...) asparagine) is linked at Asn-83. Residues Cys-99 and Cys-102 are joined by a disulfide bond. The helical transmembrane segment at 197–217 threads the bilayer; sequence NYSGTIALALLVSLVGGLLYL. Topologically, residues 218–221 are cytoplasmic; sequence RRNN. The helical transmembrane segment at 222–242 threads the bilayer; that stretch reads LEFIYNKTGWAMVSLCIVFAM. Topologically, residues 243–276 are lumenal; the sequence is TSGQMWNHIRGPPYAHKNPHNGQVSYIHGSSQAQ. A helical transmembrane segment spans residues 277-297; it reads FVAESHIILVLNAAITMGMVL. Over 298–312 the chain is Cytoplasmic; sequence LNEAATSKGDVGKRR. Residues 313-333 form a helical membrane-spanning segment; the sequence is IICLVGLGLVVFFFSFLLSIF. At 334–347 the chain is on the lumenal side; that stretch reads RSKYHGYPYSFLIK.

The protein belongs to the OST3/OST6 family. Accessory component of the STT3B-containing form of the oligosaccharyltransferase (OST) complex. OST exists in two different complex forms which contain common core subunits RPN1, RPN2, OST48, OST4, DAD1 and TMEM258, either STT3A or STT3B as catalytic subunits, and form-specific accessory subunits. OST can form stable complexes with the Sec61 complex or with both the Sec61 and TRAP complexes. The association of TUSC3 or MAGT1 with the STT3B-containing complex seems to be mutually exclusvice.

The protein resides in the endoplasmic reticulum membrane. It participates in protein modification; protein glycosylation. In terms of biological role, acts as accessory component of the N-oligosaccharyl transferase (OST) complex which catalyzes the transfer of a high mannose oligosaccharide from a lipid-linked oligosaccharide donor to an asparagine residue within an Asn-X-Ser/Thr consensus motif in nascent polypeptide chains. Involved in N-glycosylation of STT3B-dependent substrates. Specifically required for the glycosylation of a subset of acceptor sites that are near cysteine residues; in this function seems to act redundantly with MAGT1. In its oxidized form proposed to form transient mixed disulfides with a glycoprotein substrate to facilitate access of STT3B to the unmodified acceptor site. Also has oxidoreductase-independent functions in the STT3B-containing OST complex possibly involving substrate recognition. Could indirectly play a role in Mg(2+) transport. This chain is Dolichyl-diphosphooligosaccharide--protein glycosyltransferase subunit TUSC3 (Tusc3), found in Mus musculus (Mouse).